Here is a 731-residue protein sequence, read N- to C-terminus: RNA-binding protein RMD9-like, mitochondrial (731 aa).

A compositionally biased stretch (polar residues) spans 1 to 10 (MIRLAQQTQV). 3 disordered regions span residues 1–29 (MIRL…NSLT), 77–133 (GGNI…GNSI), and 590–630 (QNDR…FNNP). Residues 83-100 (NNNNHLAQNNSNNSNNHH) show a composition bias toward low complexity. Basic residues predominate over residues 101-122 (NNNRNHHHNNNRNHHQNNHNHS). Serine 132 is modified (phosphoserine). A compositionally biased stretch (polar residues) spans 598-617 (SNMNSTQISRTATPSPSLTP).

The protein belongs to the RMD9 family. Monomer. In terms of processing, phosphorylated. Phosphorylation promotes binding to RNA.

It is found in the mitochondrion inner membrane. Its function is as follows. May be involved in the processing or stability of mitochondrial mRNAs. This Saccharomyces cerevisiae (strain ATCC 204508 / S288c) (Baker's yeast) protein is RNA-binding protein RMD9-like, mitochondrial.